The following is an 893-amino-acid chain: DNA gyrase subunit A (893 aa).

Positions 35-501 (LPDVRDGLKP…GLEDLEDEDL (467 aa)) constitute a Topo IIA-type catalytic domain. Tyrosine 123 acts as the O-(5'-phospho-DNA)-tyrosine intermediate in catalysis. The GyrA-box signature appears at 528 to 534 (QNRGGRG). Residues 810–893 (VNEEDDNEEN…ASDNEEDSDE (84 aa)) form a disordered region. 2 stretches are compositionally biased toward acidic residues: residues 812 to 821 (EEDDNEENAD) and 852 to 862 (DAEMESVESPE). The segment covering 863–879 (NDDRIDIRQDFMDRVNE) has biased composition (basic and acidic residues). The span at 880-893 (DIESASDNEEDSDE) shows a compositional bias: acidic residues.

This sequence belongs to the type II topoisomerase GyrA/ParC subunit family. As to quaternary structure, heterotetramer, composed of two GyrA and two GyrB chains. In the heterotetramer, GyrA contains the active site tyrosine that forms a transient covalent intermediate with DNA, while GyrB binds cofactors and catalyzes ATP hydrolysis.

The protein resides in the cytoplasm. The enzyme catalyses ATP-dependent breakage, passage and rejoining of double-stranded DNA.. In terms of biological role, a type II topoisomerase that negatively supercoils closed circular double-stranded (ds) DNA in an ATP-dependent manner to modulate DNA topology and maintain chromosomes in an underwound state. Negative supercoiling favors strand separation, and DNA replication, transcription, recombination and repair, all of which involve strand separation. Also able to catalyze the interconversion of other topological isomers of dsDNA rings, including catenanes and knotted rings. Type II topoisomerases break and join 2 DNA strands simultaneously in an ATP-dependent manner. This chain is DNA gyrase subunit A, found in Staphylococcus epidermidis (strain ATCC 12228 / FDA PCI 1200).